We begin with the raw amino-acid sequence, 82 residues long: Photosystem I iron-sulfur center (82 aa).

2 4Fe-4S ferredoxin-type domains span residues 2-31 (SHTV…MVPW) and 37-68 (GQIA…VRVY). Positions 11, 14, 17, 21, 48, 51, 54, and 58 each coordinate [4Fe-4S] cluster.

As to quaternary structure, the eukaryotic PSI reaction center is composed of at least 11 subunits. Requires [4Fe-4S] cluster as cofactor.

Its subcellular location is the plastid. It localises to the chloroplast thylakoid membrane. The catalysed reaction is reduced [plastocyanin] + hnu + oxidized [2Fe-2S]-[ferredoxin] = oxidized [plastocyanin] + reduced [2Fe-2S]-[ferredoxin]. Its function is as follows. Apoprotein for the two 4Fe-4S centers FA and FB of photosystem I (PSI); essential for photochemical activity. FB is the terminal electron acceptor of PSI, donating electrons to ferredoxin. The C-terminus interacts with PsaA/B/D and helps assemble the protein into the PSI complex. Required for binding of PsaD and PsaE to PSI. PSI is a plastocyanin/cytochrome c6-ferredoxin oxidoreductase, converting photonic excitation into a charge separation, which transfers an electron from the donor P700 chlorophyll pair to the spectroscopically characterized acceptors A0, A1, FX, FA and FB in turn. The chain is Photosystem I iron-sulfur center from Trieres chinensis (Marine centric diatom).